The sequence spans 178 residues: Beta-lytic metalloendopeptidase (178 aa).

A disulfide bridge links C65 with C111. Zn(2+)-binding residues include H120 and H122. A disulfide bridge links C155 with C168.

The protein belongs to the peptidase M23A family. Zn(2+) is required as a cofactor.

It carries out the reaction Cleavage of N-acetylmuramoyl-|-Ala, and of the insulin B chain at 23-Gly-|-Phe-24 &gt; 18-Val-|-Cys(SO3H).. This is Beta-lytic metalloendopeptidase from Lysobacter enzymogenes.